Reading from the N-terminus, the 195-residue chain is Imidazoleglycerol-phosphate dehydratase (195 aa).

Belongs to the imidazoleglycerol-phosphate dehydratase family.

Its subcellular location is the cytoplasm. The enzyme catalyses D-erythro-1-(imidazol-4-yl)glycerol 3-phosphate = 3-(imidazol-4-yl)-2-oxopropyl phosphate + H2O. It participates in amino-acid biosynthesis; L-histidine biosynthesis; L-histidine from 5-phospho-alpha-D-ribose 1-diphosphate: step 6/9. The polypeptide is Imidazoleglycerol-phosphate dehydratase (Burkholderia mallei (strain NCTC 10247)).